Reading from the N-terminus, the 7603-residue chain is Cysteine repeat modular protein B (7603 aa).

Asn-172 carries an N-linked (GlcNAc...) asparagine glycan. Residues 223–243 (LVGFFLVPVFVVFFVLSSDAT) traverse the membrane as a helical segment. Disordered regions lie at residues 248-275 (GVGV…SSPG) and 291-323 (RDTK…GKGF). Over residues 263–275 (SVSSSSRASSSPG) the composition is skewed to low complexity. Positions 302–313 (SSRRSARARRRR) are enriched in basic residues. Residues Asn-329, Asn-589, Asn-848, Asn-1128, Asn-1183, and Asn-1402 are each glycosylated (N-linked (GlcNAc...) asparagine). The tract at residues 1554-1574 (VLRSRSGPSHPSSVSQPSPSF) is disordered. Positions 1557–1573 (SRSGPSHPSSVSQPSPS) are enriched in low complexity. N-linked (GlcNAc...) asparagine glycosylation is found at Asn-1622, Asn-2578, Asn-2664, Asn-3094, and Asn-3126. Positions 3316–3445 (SNAVPEADEN…SDLTTSQPED (130 aa)) are disordered. The span at 3321-3340 (EADENQVESAEPEQNAEGET) shows a compositional bias: acidic residues. Over residues 3342 to 3360 (EQGAEEAGGNAAEPGAESG) the composition is skewed to low complexity. Asn-3546, Asn-4367, Asn-4823, Asn-4901, Asn-5186, Asn-5546, and Asn-5666 each carry an N-linked (GlcNAc...) asparagine glycan. The segment at 5758–5799 (LAESRSDDGTVGDDVDLDDNALSGTTNSGWTTSSSNSERVRK) is disordered. Positions 5767–5776 (TVGDDVDLDD) are enriched in acidic residues. The segment covering 5780 to 5794 (SGTTNSGWTTSSSNS) has biased composition (low complexity). 5 N-linked (GlcNAc...) asparagine glycosylation sites follow: Asn-5806, Asn-5876, Asn-5998, Asn-6055, and Asn-6369. The interval 6043-6115 (GEADHTPADG…EASEAESVSA (73 aa)) is disordered. A compositionally biased stretch (polar residues) spans 6051-6060 (DGSSNSSEDS). Positions 6391–6405 (EFTDTGPAPDDHTDE) are enriched in basic and acidic residues. Residues 6391-6436 (EFTDTGPAPDDHTDEGGANLDSTGGSGEPSSSAPVDPSGENEGQLL) are disordered. Polar residues predominate over residues 6410–6423 (LDSTGGSGEPSSSA). An N-linked (GlcNAc...) asparagine glycan is attached at Asn-6453. 8 helical membrane-spanning segments follow: residues 6520–6540 (IFIL…ALTI), 6552–6572 (VLIR…LMPA), 6578–6598 (LAGW…ALHP), 6627–6647 (IFVP…CVAT), 6770–6790 (LILG…GFVA), 6831–6851 (CVAL…QEIF), 6888–6908 (GLMV…FEVF), and 6912–6932 (GAIP…SLFV). Asn-7013 is a glycosylation site (N-linked (GlcNAc...) asparagine). A helical membrane pass occupies residues 7017-7037 (FVAALSDSLSQLVIAWCQFTI). Residue Asn-7061 is glycosylated (N-linked (GlcNAc...) asparagine). The stretch at 7174–7242 (APQLRKENHA…RGLIESEIDD (69 aa)) forms a coiled coil. A disordered region spans residues 7379–7603 (AAPAAGLRSH…LKKPGSPKQE (225 aa)). A compositionally biased stretch (polar residues) spans 7408 to 7417 (LGTNLSTPSA). N-linked (GlcNAc...) asparagine glycosylation is present at Asn-7411. Low complexity-rich tracts occupy residues 7474–7496 (PTPS…SVTP), 7509–7541 (SEAP…SSDL), and 7560–7582 (GEAA…AAQP).

In terms of assembly, component of a complex, at least composed of cysteine repeat modular protein A (CRMPa), cysteine repeat modular protein B (CRMPb), micronemal protein 15 (MIC15) and thrombospondin type 1 domain-containing protein (TSP1).

It is found in the cell membrane. Its subcellular location is the endoplasmic reticulum. The protein resides in the golgi apparatus. In terms of biological role, required for triggering rhoptry secretion. Plays a role in host cell invasion. In Toxoplasma gondii, this protein is Cysteine repeat modular protein B.